The sequence spans 319 residues: ATP-dependent 6-phosphofructokinase 1 (319 aa).

Glycine 11 serves as a coordination point for ATP. 21-25 (RAVTR) provides a ligand contact to ADP. ATP-binding positions include 72–73 (RC) and 102–105 (GDGS). Aspartate 103 contributes to the Mg(2+) binding site. 125-127 (TID) serves as a coordination point for substrate. Aspartate 127 serves as the catalytic Proton acceptor. Arginine 154 serves as a coordination point for ADP. Residues arginine 162 and 169–171 (MGR) contribute to the substrate site. ADP-binding positions include 185 to 187 (GAE) and 213 to 215 (KTH). Residues glutamate 222, arginine 243, and 249–252 (HIQR) contribute to the substrate site.

The protein belongs to the phosphofructokinase type A (PFKA) family. ATP-dependent PFK group I subfamily. Prokaryotic clade 'B1' sub-subfamily. Homotetramer. It depends on Mg(2+) as a cofactor.

Its subcellular location is the cytoplasm. The enzyme catalyses beta-D-fructose 6-phosphate + ATP = beta-D-fructose 1,6-bisphosphate + ADP + H(+). The protein operates within carbohydrate degradation; glycolysis; D-glyceraldehyde 3-phosphate and glycerone phosphate from D-glucose: step 3/4. Its activity is regulated as follows. Allosterically activated by ADP and other diphosphonucleosides, and allosterically inhibited by phosphoenolpyruvate. Its function is as follows. Catalyzes the phosphorylation of D-fructose 6-phosphate to fructose 1,6-bisphosphate by ATP, the first committing step of glycolysis. The chain is ATP-dependent 6-phosphofructokinase 1 from Clostridium perfringens (strain 13 / Type A).